Consider the following 486-residue polypeptide: N-succinylglutamate 5-semialdehyde dehydrogenase (486 aa).

G220–G225 contacts NAD(+). Residues E243 and C277 contribute to the active site.

The protein belongs to the aldehyde dehydrogenase family. AstD subfamily.

The catalysed reaction is N-succinyl-L-glutamate 5-semialdehyde + NAD(+) + H2O = N-succinyl-L-glutamate + NADH + 2 H(+). It functions in the pathway amino-acid degradation; L-arginine degradation via AST pathway; L-glutamate and succinate from L-arginine: step 4/5. In terms of biological role, catalyzes the NAD-dependent reduction of succinylglutamate semialdehyde into succinylglutamate. In Shewanella halifaxensis (strain HAW-EB4), this protein is N-succinylglutamate 5-semialdehyde dehydrogenase.